The following is a 362-amino-acid chain: Oxygen-dependent coproporphyrinogen-III oxidase (362 aa).

Serine 118 serves as a coordination point for substrate. Histidine 122 and histidine 132 together coordinate a divalent metal cation. The Proton donor role is filled by histidine 132. 134–136 lines the substrate pocket; the sequence is NYR. Histidine 166 and histidine 196 together coordinate a divalent metal cation. Residues 286-321 form an important for dimerization region; sequence YVEFNLVWDRGTIFGLQTNGRTESILMSLPPLVRWE.

Belongs to the aerobic coproporphyrinogen-III oxidase family. As to quaternary structure, homodimer. Requires a divalent metal cation as cofactor.

Its subcellular location is the cytoplasm. It carries out the reaction coproporphyrinogen III + O2 + 2 H(+) = protoporphyrinogen IX + 2 CO2 + 2 H2O. Its pathway is porphyrin-containing compound metabolism; protoporphyrin-IX biosynthesis; protoporphyrinogen-IX from coproporphyrinogen-III (O2 route): step 1/1. Its function is as follows. Involved in the heme and chlorophyll biosynthesis. Catalyzes the aerobic oxidative decarboxylation of propionate groups of rings A and B of coproporphyrinogen-III to yield the vinyl groups in protoporphyrinogen-IX. The polypeptide is Oxygen-dependent coproporphyrinogen-III oxidase (Synechococcus sp. (strain CC9605)).